The chain runs to 143 residues: Phosphatidylethanolamine-binding protein homolog R644 (143 aa).

Belongs to the phosphatidylethanolamine-binding protein family.

The protein resides in the virion. This chain is Phosphatidylethanolamine-binding protein homolog R644, found in Acanthamoeba polyphaga mimivirus (APMV).